The primary structure comprises 826 residues: Arf-GAP with ANK repeat and PH domain-containing protein cnt-1 (826 aa).

The PH domain occupies 275–373; the sequence is DVMMEGYLYK…WMRALQRTIL (99 aa). The Arf-GAP domain occupies 447–572; sequence TTAFEQVRRV…RFAVAEDTRA (126 aa). The segment at 462 to 485 adopts a C4-type zinc-finger fold; it reads CADCGSPAPKWVSINLGVVLCIEC. The segment at 570-604 is disordered; sequence TRARSSATNRQEHLKHKTSIGGNSSSNGVNRSSSY. Positions 588 to 603 are enriched in low complexity; it reads SIGGNSSSNGVNRSSS. ANK repeat units lie at residues 690–719, 723–752, and 756–789; these read NGTTALHIATRNGQTAAVEFLLLNGAKINM, KLNTPLHLAAKEGHTLPVCQLLKRGADSNL, and DSKTPLDIAMECTHADIVTLFRVTIMRNDFNADF.

Interacts (via C-terminal ankyrin repeat) with rab-10 (GTP-bound form); the interaction is required for cnt-1 recruitment to endosomes. Interacts (via C-terminal ankyrin repeat) with rab-8 (GTP-bound form) and rab-35 (GTP-bound form). In terms of processing, cleaved by caspase ced-3 after Asp-382 and Asp-609. Cleavage at Asp-382 is required for subsequent cleavage at Asp-609.

It localises to the cytoplasm. Its subcellular location is the recycling endosome membrane. The protein localises to the basolateral cell membrane. It is found in the apical cell membrane. The protein resides in the cell membrane. Its function is as follows. GTPase-activating protein for the ADP ribosylation factor family. Regulates endosome recycling downstream of rab-10 and upstream of arf-6. Promotes apoptosis during embryonic development. Produced by caspase ced-3-mediated cleavage, and translocates to the plasma membrane where it prevents the activation of the prosurvival Akt-1/2 and sgk-1 signaling pathway by competing with Akt-1/2 for the binding to PtdIns(3,4,5)P3. This chain is Arf-GAP with ANK repeat and PH domain-containing protein cnt-1, found in Caenorhabditis elegans.